Consider the following 259-residue polypeptide: DNA-directed RNA polymerase subunit Rpo3 (259 aa).

The protein belongs to the archaeal Rpo3/eukaryotic RPB3 RNA polymerase subunit family. As to quaternary structure, part of the RNA polymerase complex.

The protein resides in the cytoplasm. It catalyses the reaction RNA(n) + a ribonucleoside 5'-triphosphate = RNA(n+1) + diphosphate. Functionally, DNA-dependent RNA polymerase (RNAP) catalyzes the transcription of DNA into RNA using the four ribonucleoside triphosphates as substrates. In Pyrococcus horikoshii (strain ATCC 700860 / DSM 12428 / JCM 9974 / NBRC 100139 / OT-3), this protein is DNA-directed RNA polymerase subunit Rpo3.